The sequence spans 67 residues: Large ribosomal subunit protein uL29 (67 aa).

Belongs to the universal ribosomal protein uL29 family.

In Methanosarcina barkeri (strain Fusaro / DSM 804), this protein is Large ribosomal subunit protein uL29.